The sequence spans 462 residues: Bifunctional enzyme LpxC/FabZ (462 aa).

Residues 1 to 302 (MQKQQTLKDK…MARLIRKEIK (302 aa)) are UDP-3-O-acyl-N-acetylglucosamine deacetylase. 3 residues coordinate Zn(2+): His-78, His-260, and Asp-264. The active-site Proton donor is His-287. A 3-hydroxyacyl-[acyl-carrier-protein] dehydratase region spans residues 303 to 462 (QNEAQAPVYN…FMAQIIQNKE (160 aa)). The active site involves His-364.

It in the N-terminal section; belongs to the LpxC family. This sequence in the C-terminal section; belongs to the thioester dehydratase family. It depends on Zn(2+) as a cofactor.

It is found in the cytoplasm. The catalysed reaction is a UDP-3-O-[(3R)-3-hydroxyacyl]-N-acetyl-alpha-D-glucosamine + H2O = a UDP-3-O-[(3R)-3-hydroxyacyl]-alpha-D-glucosamine + acetate. The enzyme catalyses a (3R)-hydroxyacyl-[ACP] = a (2E)-enoyl-[ACP] + H2O. Its pathway is glycolipid biosynthesis; lipid IV(A) biosynthesis; lipid IV(A) from (3R)-3-hydroxytetradecanoyl-[acyl-carrier-protein] and UDP-N-acetyl-alpha-D-glucosamine: step 2/6. Catalyzes the hydrolysis of UDP-3-O-myristoyl-N-acetylglucosamine to form UDP-3-O-myristoylglucosamine and acetate, the committed step in lipid A biosynthesis. In terms of biological role, involved in unsaturated fatty acids biosynthesis. Catalyzes the dehydration of short chain beta-hydroxyacyl-ACPs and long chain saturated and unsaturated beta-hydroxyacyl-ACPs. The chain is Bifunctional enzyme LpxC/FabZ (lpxC/fabZ) from Porphyromonas gingivalis (strain ATCC BAA-308 / W83).